The following is a 305-amino-acid chain: Acetaldehyde dehydrogenase (305 aa).

Residue serine 12 to isoleucine 15 participates in NAD(+) binding. The Acyl-thioester intermediate role is filled by cysteine 127. Residues serine 158–asparagine 166 and asparagine 277 each bind NAD(+).

Belongs to the acetaldehyde dehydrogenase family.

It catalyses the reaction acetaldehyde + NAD(+) + CoA = acetyl-CoA + NADH + H(+). The polypeptide is Acetaldehyde dehydrogenase (Mycolicibacterium paratuberculosis (strain ATCC BAA-968 / K-10) (Mycobacterium paratuberculosis)).